The primary structure comprises 103 residues: Large ribosomal subunit protein bL21 (103 aa).

This sequence belongs to the bacterial ribosomal protein bL21 family. As to quaternary structure, part of the 50S ribosomal subunit. Contacts protein L20.

Functionally, this protein binds to 23S rRNA in the presence of protein L20. This Glaesserella parasuis serovar 5 (strain SH0165) (Haemophilus parasuis) protein is Large ribosomal subunit protein bL21.